A 447-amino-acid chain; its full sequence is 3-phosphoshikimate 1-carboxyvinyltransferase (447 aa).

3-phosphoshikimate contacts are provided by lysine 25, serine 26, and arginine 30. Lysine 25 lines the phosphoenolpyruvate pocket. Positions 96 and 124 each coordinate phosphoenolpyruvate. The 3-phosphoshikimate site is built by serine 171, serine 172, glutamine 173, serine 203, aspartate 325, and lysine 352. Position 173 (glutamine 173) interacts with phosphoenolpyruvate. The active-site Proton acceptor is aspartate 325. Positions 356, 400, and 425 each coordinate phosphoenolpyruvate.

This sequence belongs to the EPSP synthase family. Monomer.

Its subcellular location is the cytoplasm. The enzyme catalyses 3-phosphoshikimate + phosphoenolpyruvate = 5-O-(1-carboxyvinyl)-3-phosphoshikimate + phosphate. It participates in metabolic intermediate biosynthesis; chorismate biosynthesis; chorismate from D-erythrose 4-phosphate and phosphoenolpyruvate: step 6/7. In terms of biological role, catalyzes the transfer of the enolpyruvyl moiety of phosphoenolpyruvate (PEP) to the 5-hydroxyl of shikimate-3-phosphate (S3P) to produce enolpyruvyl shikimate-3-phosphate and inorganic phosphate. The polypeptide is 3-phosphoshikimate 1-carboxyvinyltransferase (Bordetella petrii (strain ATCC BAA-461 / DSM 12804 / CCUG 43448)).